Here is a 660-residue protein sequence, read N- to C-terminus: tRNA 5-methylaminomethyl-2-thiouridine biosynthesis bifunctional protein MnmC (660 aa).

The tRNA (mnm(5)s(2)U34)-methyltransferase stretch occupies residues 1–235 (MTITRHARID…KWEVLRGAFI (235 aa)). Residues 266 to 660 (IGAGLAGCAT…LRGLIRGGGK (395 aa)) are FAD-dependent cmnm(5)s(2)U34 oxidoreductase.

It in the N-terminal section; belongs to the methyltransferase superfamily. tRNA (mnm(5)s(2)U34)-methyltransferase family. This sequence in the C-terminal section; belongs to the DAO family. FAD serves as cofactor.

The protein localises to the cytoplasm. It catalyses the reaction 5-aminomethyl-2-thiouridine(34) in tRNA + S-adenosyl-L-methionine = 5-methylaminomethyl-2-thiouridine(34) in tRNA + S-adenosyl-L-homocysteine + H(+). Catalyzes the last two steps in the biosynthesis of 5-methylaminomethyl-2-thiouridine (mnm(5)s(2)U) at the wobble position (U34) in tRNA. Catalyzes the FAD-dependent demodification of cmnm(5)s(2)U34 to nm(5)s(2)U34, followed by the transfer of a methyl group from S-adenosyl-L-methionine to nm(5)s(2)U34, to form mnm(5)s(2)U34. In Pseudomonas syringae pv. tomato (strain ATCC BAA-871 / DC3000), this protein is tRNA 5-methylaminomethyl-2-thiouridine biosynthesis bifunctional protein MnmC.